The chain runs to 372 residues: Histidine protein methyltransferase 1 homolog (372 aa).

Disordered regions lie at residues 30-55 (SKEL…QFDL) and 68-103 (NAAP…AKEH). The segment covering 39–49 (QKGEERDRKCS) has biased composition (basic and acidic residues). The segment covering 70–87 (APSQDTDSPLSAASSSRN) has biased composition (polar residues). 2 positions are modified to phosphoserine: Ser-72 and Ser-77. His-154 is modified (tele-methylhistidine; by autocatalysis). S-adenosyl-L-methionine-binding positions include 168-172 (IWECT), Gly-195, and 216-218 (QDY). Residues 247–253 (PDVKRCR) carry the Nuclear localization signal motif. S-adenosyl-L-methionine is bound by residues 268 to 270 (GEW) and Ser-293.

This sequence belongs to the methyltransferase superfamily. METTL18 family. In terms of assembly, interacts with GRWD1 and members of the heat shock protein 90 and 70 families; these proteins may possibly be methylation substrates for the enzyme. In terms of processing, monomethylated at His-154 through automethylation. Automethylation at His-154 positively regulates the methyltransferase activity toward RPL3. Probably methylated on other residues.

The protein resides in the cytoplasm. It localises to the cytosol. It is found in the nucleus. The protein localises to the nucleolus. The catalysed reaction is L-histidyl-[protein] + S-adenosyl-L-methionine = N(tele)-methyl-L-histidyl-[protein] + S-adenosyl-L-homocysteine + H(+). Functionally, protein-L-histidine N-tele-methyltransferase that specifically monomethylates RPL3, thereby regulating translation elongation. Histidine methylation of RPL3 regulates translation elongation by slowing ribosome traversal on tyrosine codons: slower elongation provides enough time for proper folding of synthesized proteins and prevents cellular aggregation of tyrosine-rich proteins. This is Histidine protein methyltransferase 1 homolog from Homo sapiens (Human).